Consider the following 791-residue polypeptide: Cellobionic acid phosphorylase (791 aa).

The active-site Proton donor is the Asp-478.

It belongs to the glycosyl hydrolase 94 family. Cellobionic acid phosphorylase subfamily. Homodimer.

The enzyme catalyses 4-O-beta-D-glucopyranosyl-D-gluconate + phosphate = D-gluconate + alpha-D-glucose 1-phosphate. Its pathway is glycan metabolism; cellulose degradation. In terms of biological role, catalyzes the reversible phosphorolysis of cellobionic acid (4-O-beta-D-glucopyranosyl-D-gluconate), a probable step in cellulose degradation. May be part of a metabolic pathway where cellobionic acid is converted into alpha-D-glucose 1-phosphate and D-gluconic acid to enter glycolysis and the pentose phosphate pathway, respectively. Produces 4-O-beta-D-glucopyranosyl-D-glucuronate from alpha-D-glucose 1-phosphate and D-glucuronate with low activity in the synthetic direction. In Neurospora crassa (strain ATCC 24698 / 74-OR23-1A / CBS 708.71 / DSM 1257 / FGSC 987), this protein is Cellobionic acid phosphorylase.